The primary structure comprises 29 residues: Brevinin-2Td (29 aa).

The cysteines at positions 23 and 29 are disulfide-linked.

This sequence belongs to the frog skin active peptide (FSAP) family. Brevinin subfamily. As to expression, expressed by the skin glands.

It is found in the secreted. Antibacterial activity against representative Gram-negative and Gram-positive bacteria. The sequence is that of Brevinin-2Td from Rana temporaria (European common frog).